A 235-amino-acid chain; its full sequence is Ribosome maturation factor RimM (235 aa).

Residues 1–19 (MKHEEANKEIGGRGAEGQR) show a composition bias toward basic and acidic residues. The tract at residues 1–49 (MKHEEANKEIGGRGAEGQRSKRVGGNSKIQNIQSPAPNPQPIVPNTQSP) is disordered. The region spanning 150–230 (EDEYHVLDLI…RIEITPPPGL (81 aa)) is the PRC barrel domain.

Belongs to the RimM family. As to quaternary structure, binds ribosomal protein uS19.

The protein resides in the cytoplasm. Its function is as follows. An accessory protein needed during the final step in the assembly of 30S ribosomal subunit, possibly for assembly of the head region. Essential for efficient processing of 16S rRNA. May be needed both before and after RbfA during the maturation of 16S rRNA. It has affinity for free ribosomal 30S subunits but not for 70S ribosomes. The polypeptide is Ribosome maturation factor RimM (Nostoc punctiforme (strain ATCC 29133 / PCC 73102)).